Here is an 81-residue protein sequence, read N- to C-terminus: ATP synthase subunit c (81 aa).

2 consecutive transmembrane segments (helical) span residues 6–26 (AAASVIAAALAVGLGAIGPGI) and 57–77 (LAFMESLTIYGLVIALVLLFA).

Belongs to the ATPase C chain family. F-type ATPases have 2 components, F(1) - the catalytic core - and F(0) - the membrane proton channel. F(1) has five subunits: alpha(3), beta(3), gamma(1), delta(1), epsilon(1). F(0) has four main subunits: a(1), b(1), b'(1) and c(10-14). The alpha and beta chains form an alternating ring which encloses part of the gamma chain. F(1) is attached to F(0) by a central stalk formed by the gamma and epsilon chains, while a peripheral stalk is formed by the delta, b and b' chains.

It is found in the cellular thylakoid membrane. In terms of biological role, f(1)F(0) ATP synthase produces ATP from ADP in the presence of a proton or sodium gradient. F-type ATPases consist of two structural domains, F(1) containing the extramembraneous catalytic core and F(0) containing the membrane proton channel, linked together by a central stalk and a peripheral stalk. During catalysis, ATP synthesis in the catalytic domain of F(1) is coupled via a rotary mechanism of the central stalk subunits to proton translocation. Its function is as follows. Key component of the F(0) channel; it plays a direct role in translocation across the membrane. A homomeric c-ring of between 10-14 subunits forms the central stalk rotor element with the F(1) delta and epsilon subunits. The sequence is that of ATP synthase subunit c from Synechocystis sp. (strain ATCC 27184 / PCC 6803 / Kazusa).